The sequence spans 210 residues: RNA binding protein, mRNA processing factor 2 (210 aa).

Basic and acidic residues predominate over residues 1 to 10 (MSNLKPDVEH). Residues 1 to 25 (MSNLKPDVEHCTGAGTGTGTGPSGP) form a disordered region. S2 bears the N-acetylserine mark. In terms of domain architecture, RRM spans 31 to 108 (RTLFVSGLPV…QTLRLEFAKA (78 aa)). Residues 41–51 (DIKPRELYLLF) are important for homodimerization.

As to quaternary structure, homodimer. Interacts with EEF2.

It is found in the cytoplasm. Its subcellular location is the nucleus. The protein localises to the stress granule. In terms of biological role, RNA-binding protein involved in the regulation of smooth muscle cell differentiation and proliferation in the gastrointestinal system. Binds NOG mRNA, the major inhibitor of the bone morphogenetic protein (BMP) pathway. Mediates an increase of NOG mRNA levels, thereby contributing to the negative regulation of BMP signaling pathway and promoting reversible dedifferentiation and proliferation of smooth muscle cells. Acts as a pre-mRNA alternative splicing regulator. Mediates ACTN1 and FLNB alternative splicing. Likely binds to mRNA tandem CAC trinucleotide or CA dinucleotide motifs. The sequence is that of RNA binding protein, mRNA processing factor 2 (Rbpms2) from Rattus norvegicus (Rat).